A 134-amino-acid chain; its full sequence is Histone H2A (134 aa).

The segment covering 1–11 (MTGGGKSGGKA) has biased composition (gly residues). The interval 1 to 25 (MTGGGKSGGKASGSKNAQSRSSKAG) is disordered. 2 positions are modified to N6-acetyllysine: lysine 6 and lysine 10. N5-methylglutamine is present on glutamine 107. Residue serine 131 is modified to Phosphoserine. Residues 131 to 132 (SQ) carry the [ST]-Q motif motif.

The protein belongs to the histone H2A family. In terms of assembly, the nucleosome is a histone octamer containing two molecules each of H2A, H2B, H3 and H4 assembled in one H3-H4 heterotetramer and two H2A-H2B heterodimers. The octamer wraps approximately 147 bp of DNA. Phosphorylated to form H2AS128ph (gamma-H2A) in response to DNA double-strand breaks (DSBs) generated by exogenous genotoxic agents and by stalled replication forks. Phosphorylation is dependent on the DNA damage checkpoint kinases mec-1/ATR and tel-1/ATM, spreads on either side of a detected DSB site and may mark the surrounding chromatin for recruitment of proteins required for DNA damage signaling and repair. Gamma-H2A is removed from the DNA prior to the strand invasion-primer extension step of the repair process and subsequently dephosphorylated. Dephosphorylation is necessary for efficient recovery from the DNA damage checkpoint. Post-translationally, acetylated by esa-1 to form H2AK4ac and H2AK7ac.

It localises to the nucleus. It is found in the chromosome. Functionally, core component of nucleosome which plays a central role in DNA double strand break (DSB) repair. Nucleosomes wrap and compact DNA into chromatin, limiting DNA accessibility to the cellular machineries which require DNA as a template. Histones thereby play a central role in transcription regulation, DNA repair, DNA replication and chromosomal stability. DNA accessibility is regulated via a complex set of post-translational modifications of histones, also called histone code, and nucleosome remodeling. This Neurospora crassa (strain ATCC 24698 / 74-OR23-1A / CBS 708.71 / DSM 1257 / FGSC 987) protein is Histone H2A (hh2a).